The sequence spans 303 residues: D-alanine--D-alanine ligase (303 aa).

Positions 100-295 (KQLLRRHGIL…FPALIARLIE (196 aa)) constitute an ATP-grasp domain. Residue 127–180 (GLGYPLFVKPNTGGSSLCLSRVTQPEGLAPALEAVFAHCGEAIVEPAIPGVEVT) participates in ATP binding. The Mg(2+) site is built by D249, E262, and N264.

Belongs to the D-alanine--D-alanine ligase family. Requires Mg(2+) as cofactor. Mn(2+) is required as a cofactor.

The protein resides in the cytoplasm. The catalysed reaction is 2 D-alanine + ATP = D-alanyl-D-alanine + ADP + phosphate + H(+). It participates in cell wall biogenesis; peptidoglycan biosynthesis. Functionally, cell wall formation. This chain is D-alanine--D-alanine ligase, found in Nitratidesulfovibrio vulgaris (strain ATCC 29579 / DSM 644 / CCUG 34227 / NCIMB 8303 / VKM B-1760 / Hildenborough) (Desulfovibrio vulgaris).